The sequence spans 365 residues: S-adenosylmethionine:tRNA ribosyltransferase-isomerase (365 aa).

Belongs to the QueA family. In terms of assembly, monomer.

The protein resides in the cytoplasm. The enzyme catalyses 7-aminomethyl-7-carbaguanosine(34) in tRNA + S-adenosyl-L-methionine = epoxyqueuosine(34) in tRNA + adenine + L-methionine + 2 H(+). It functions in the pathway tRNA modification; tRNA-queuosine biosynthesis. In terms of biological role, transfers and isomerizes the ribose moiety from AdoMet to the 7-aminomethyl group of 7-deazaguanine (preQ1-tRNA) to give epoxyqueuosine (oQ-tRNA). The polypeptide is S-adenosylmethionine:tRNA ribosyltransferase-isomerase (Rickettsia africae (strain ESF-5)).